We begin with the raw amino-acid sequence, 222 residues long: Probable GTP-binding protein EngB (222 aa).

The EngB-type G domain occupies T27 to G202. GTP-binding positions include G35–S42, G61–L65, D81–G84, T148–D151, and F181–S183. Mg(2+)-binding residues include S42 and T63.

The protein belongs to the TRAFAC class TrmE-Era-EngA-EngB-Septin-like GTPase superfamily. EngB GTPase family. Mg(2+) serves as cofactor.

Its function is as follows. Necessary for normal cell division and for the maintenance of normal septation. This is Probable GTP-binding protein EngB from Pseudoalteromonas translucida (strain TAC 125).